Reading from the N-terminus, the 77-residue chain is RNA-binding protein Hfq (77 aa).

The 61-residue stretch at 10 to 70 folds into the Sm domain; that stretch reads DIFLNSARKN…ITTVTPEKPI (61 aa).

This sequence belongs to the Hfq family. Homohexamer.

RNA chaperone that binds small regulatory RNA (sRNAs) and mRNAs to facilitate mRNA translational regulation in response to envelope stress, environmental stress and changes in metabolite concentrations. Also binds with high specificity to tRNAs. This is RNA-binding protein Hfq from Clostridium botulinum (strain Eklund 17B / Type B).